The sequence spans 78 residues: 4-methyl-3-hydroxyanthranilic acid carrier protein (78 aa).

O-(pantetheine 4'-phosphoryl)serine is present on serine 33.

The protein belongs to the acyl carrier protein (ACP) family. Post-translationally, 4'-phosphopantetheine is transferred from CoA to a specific serine of the apo-form of this carrier protein.

Its pathway is antibiotic biosynthesis. Involved in the biosynthesis of actinomycin. Acts as a carrier in the transfer and thioesterification of 4-methyl-3-hydroxyanthranilic acid (4-MHA). This is 4-methyl-3-hydroxyanthranilic acid carrier protein from Streptomyces anulatus (Streptomyces chrysomallus).